Reading from the N-terminus, the 377-residue chain is 1-deoxy-D-xylulose 5-phosphate reductoisomerase (377 aa).

Residues T20, G21, I23, N46, and N115 each contribute to the NADPH site. Position 116 (K116) interacts with 1-deoxy-D-xylulose 5-phosphate. Position 117 (E117) interacts with NADPH. Mn(2+) is bound at residue D141. 1-deoxy-D-xylulose 5-phosphate is bound by residues S142, E143, S166, and H189. Residue E143 coordinates Mn(2+). Residue G195 participates in NADPH binding. 1-deoxy-D-xylulose 5-phosphate is bound by residues S202, N207, K208, and E211. E211 lines the Mn(2+) pocket.

It belongs to the DXR family. The cofactor is Mg(2+). It depends on Mn(2+) as a cofactor.

It catalyses the reaction 2-C-methyl-D-erythritol 4-phosphate + NADP(+) = 1-deoxy-D-xylulose 5-phosphate + NADPH + H(+). The protein operates within isoprenoid biosynthesis; isopentenyl diphosphate biosynthesis via DXP pathway; isopentenyl diphosphate from 1-deoxy-D-xylulose 5-phosphate: step 1/6. In terms of biological role, catalyzes the NADPH-dependent rearrangement and reduction of 1-deoxy-D-xylulose-5-phosphate (DXP) to 2-C-methyl-D-erythritol 4-phosphate (MEP). The chain is 1-deoxy-D-xylulose 5-phosphate reductoisomerase from Malacoplasma penetrans (strain HF-2) (Mycoplasma penetrans).